Here is a 304-residue protein sequence, read N- to C-terminus: Protease HtpX homolog (304 aa).

Transmembrane regions (helical) follow at residues 14-34 and 39-59; these read VFII…IGII and YLNG…IMVM. H144 contacts Zn(2+). Residue E145 is part of the active site. H148 contacts Zn(2+). 2 helical membrane passes run 159–179 and 202–222; these read IAIA…RMIF and AIIY…ATAI. E231 serves as a coordination point for Zn(2+).

It belongs to the peptidase M48B family. It depends on Zn(2+) as a cofactor.

Its subcellular location is the cell membrane. The polypeptide is Protease HtpX homolog (Listeria monocytogenes serotype 4a (strain HCC23)).